A 128-amino-acid chain; its full sequence is Natriuretic peptides A (128 aa).

Residues 36–84 are disordered; it reads QVASEQNEEAGAVLSALPEVPSWPGEAGPAQREGGALGRGPWDSSDRSA. The propeptide occupies 68–78; the sequence is EGGALGRGPWD. Phosphoserine is present on S104. An intrachain disulfide couples C105 to C121. The segment at 122-126 is important for degradation of atrial natriuretic peptide by IDE; sequence NSFRY.

It belongs to the natriuretic peptide family. In terms of assembly, homodimer; disulfide-linked antiparallel dimer. Post-translationally, the precursor molecule is proteolytically cleaved by CORIN at Arg-98 to produce atrial natriuretic peptide. Undergoes further proteolytic cleavage by unknown proteases to give rise to long-acting natriuretic peptide, vessel dilator and kaliuretic peptide. Additional processing gives rise to the auriculin and atriopeptin peptides. In the kidneys, alternative processing by an unknown protease results in the peptide urodilatin. Cleavage by MME initiates degradation of the factor and thereby regulates its activity. Degraded by IDE (in vitro). During IDE degradation, the resulting products can temporarily stimulate NPR2 to produce cGMP, before the fragments are completely degraded and inactivated by IDE (in vitro). In terms of processing, degraded by IDE. Post-translationally, phosphorylation on Ser-104 decreases vasorelaxant activity.

The protein localises to the secreted. It localises to the perikaryon. The protein resides in the cell projection. Its function is as follows. Hormone that plays a key role in mediating cardio-renal homeostasis, and is involved in vascular remodeling and regulating energy metabolism. Acts by specifically binding and stimulating NPR1 to produce cGMP, which in turn activates effector proteins, such as PRKG1, that drive various biological responses. Regulates vasodilation, natriuresis, diuresis and aldosterone synthesis and is therefore essential for regulating blood pressure, controlling the extracellular fluid volume and maintaining the fluid-electrolyte balance. Also involved in inhibiting cardiac remodeling and cardiac hypertrophy by inducing cardiomyocyte apoptosis and attenuating the growth of cardiomyocytes and fibroblasts. Plays a role in female pregnancy by promoting trophoblast invasion and spiral artery remodeling in uterus, and thus prevents pregnancy-induced hypertension. In adipose tissue, acts in various cGMP- and PKG-dependent pathways to regulate lipid metabolism and energy homeostasis. This includes up-regulating lipid metabolism and mitochondrial oxygen utilization by activating the AMP-activated protein kinase (AMPK), and increasing energy expenditure by acting via MAPK11 to promote the UCP1-dependent thermogenesis of brown adipose tissue. Binds the clearance receptor NPR3 which removes the hormone from circulation. In terms of biological role, may have a role in cardio-renal homeostasis through regulation of natriuresis, diuresis, vasodilation, and inhibiting aldosterone synthesis. In vitro, promotes the production of cGMP and induces vasodilation. May promote natriuresis, at least in part, by enhancing prostaglandin E2 synthesis resulting in the inhibition of renal Na+-K+-ATPase. However reports on the involvement of this peptide in mammal blood volume and blood pressure homeostasis are conflicting; according to a report, in vivo it is not sufficient to activate cGMP and does not inhibit collecting duct transport nor effect diuresis and natriuresis. Appears to bind to specific receptors that are distinct from the receptors bound by atrial natriuretic peptide and vessel dilator. Possibly enhances protein excretion in urine by decreasing proximal tubular protein reabsorption. Functionally, may have a role in cardio-renal homeostasis through regulation of natriuresis, diuresis, and vasodilation. In vitro, promotes the production of cGMP and induces vasodilation. May promote natriuresis, at least in part, by enhancing prostaglandin E2 synthesis resulting in the inhibition of renal Na+-K+-ATPase. However reports on the involvement of this peptide in mammal blood volume and blood pressure homeostasis are conflicting; according to a report it is not sufficient to activate cGMP and does not inhibit collecting duct transport nor effect diuresis and natriuresis. Appears to bind to specific receptors that are distinct from the receptors bound by the atrial natriuretic and long-acting natriuretic peptides. Possibly functions in protein excretion in urine by maintaining the integrity of the proximal tubules and enhancing protein excretion by decreasing proximal tubular protein reabsorption. May have a role in cardio-renal homeostasis through regulation of diuresis and inhibiting aldosterone synthesis. In vitro, promotes the production of cGMP and induces vasodilation. May promote natriuresis, at least in part, by enhancing prostaglandin E2 synthesis resulting in the inhibition of renal Na+-K+-ATPase. May have a role in potassium excretion but not sodium excretion (natriuresis). Possibly enhances protein excretion in urine by decreasing proximal tubular protein reabsorption. Its function is as follows. Hormone produced in the kidneys that appears to be important for maintaining cardio-renal homeostasis. Mediates vasodilation, natriuresis and diuresis primarily in the renal system, in order to maintain the extracellular fluid volume and control the fluid-electrolyte balance. Specifically binds and stimulates cGMP production by renal transmembrane receptors, likely NPR1. Urodilatin not ANP, may be the natriuretic peptide responsible for the regulation of sodium and water homeostasis in the kidney. In terms of biological role, may have a role in cardio-renal homeostasis through regulation of natriuresis and vasodilation. In vivo promotes natriuresis and in vitro, vasodilates renal artery strips. Functionally, may have a role in cardio-renal homeostasis through regulation of regulation of natriuresis and vasodilation. In vivo promotes natriuresis. In vitro, vasodilates intestinal smooth muscle but not smooth muscle strips. May have a role in cardio-renal homeostasis through regulation of natriuresis and vasodilation. In vivo promotes natriuresis. In vitro, selectively vasodilates intestinal and vascular smooth muscle strips. Its function is as follows. May have a role in cardio-renal homeostasis through regulation of natriuresis and vasodilation. In vivo promotes natriuresis. In vitro, selectively vasodilates intestinal smooth muscle but not vascular smooth muscle strips. The chain is Natriuretic peptides A (NPPA) from Cavia porcellus (Guinea pig).